Reading from the N-terminus, the 96-residue chain is MSAVSREGDDWILRLYIQPKASRDLIIGLHGDELKVAITAPPVDGQANAHLLKFIAKQFRVAKSRITLEKGELGRHKQLRISQPQQIPDAVAAALG.

Belongs to the UPF0235 family.

This is UPF0235 protein NT01EI_0281 from Edwardsiella ictaluri (strain 93-146).